A 105-amino-acid polypeptide reads, in one-letter code: Large ribosomal subunit protein uL24 (105 aa).

It belongs to the universal ribosomal protein uL24 family. As to quaternary structure, part of the 50S ribosomal subunit.

Its function is as follows. One of two assembly initiator proteins, it binds directly to the 5'-end of the 23S rRNA, where it nucleates assembly of the 50S subunit. Functionally, one of the proteins that surrounds the polypeptide exit tunnel on the outside of the subunit. The polypeptide is Large ribosomal subunit protein uL24 (Francisella tularensis subsp. novicida (strain U112)).